A 302-amino-acid polypeptide reads, in one-letter code: Lysosomal thioesterase PPT2 (302 aa).

The signal sequence occupies residues 1–27 (MPGLWRQRLPSAWALLLLPFLPLLLPA). An N-linked (GlcNAc...) asparagine glycan is attached at Asn60. 2 cysteine pairs are disulfide-bonded: Cys109–Cys117 and Cys165–Cys176. The active-site Nucleophile is the Ser111. Residues Asn190 and Asn206 are each glycosylated (N-linked (GlcNAc...) asparagine). Asp228 is an active-site residue. Asn245 carries an N-linked (GlcNAc...) asparagine glycan. A disulfide bridge links Cys276 with Cys296. His283 is a catalytic residue. Asn289 carries N-linked (GlcNAc...) asparagine glycosylation.

The protein belongs to the palmitoyl-protein thioesterase family.

Its subcellular location is the lysosome. It catalyses the reaction hexadecanoyl-CoA + H2O = hexadecanoate + CoA + H(+). The enzyme catalyses S-hexadecanoyl-N-acetylcysteamine + H2O = N-acetylcysteamine + hexadecanoate + H(+). Catalyzes the cleavage of thioester bonds from S-palmitoyl-CoA or S-palmitoyl-N-acetylcysteamine (unbranched structures) but does not have activity against palmitoylcysteine or palmitoylated proteins, branched structures or bulky head groups. Conversely, hydrolyzes both long and short chain fatty acyl-CoA substrate. This Rattus norvegicus (Rat) protein is Lysosomal thioesterase PPT2 (Ppt2).